A 355-amino-acid polypeptide reads, in one-letter code: DNA polymerase IV (355 aa).

Residues 7 to 188 (IIHIDMDCFY…LPVRKLFGVG (182 aa)) enclose the UmuC domain. Mg(2+) is bound by residues D11 and D106. The active site involves E107.

Belongs to the DNA polymerase type-Y family. Monomer. Mg(2+) is required as a cofactor.

The protein resides in the cytoplasm. It catalyses the reaction DNA(n) + a 2'-deoxyribonucleoside 5'-triphosphate = DNA(n+1) + diphosphate. Poorly processive, error-prone DNA polymerase involved in untargeted mutagenesis. Copies undamaged DNA at stalled replication forks, which arise in vivo from mismatched or misaligned primer ends. These misaligned primers can be extended by PolIV. Exhibits no 3'-5' exonuclease (proofreading) activity. May be involved in translesional synthesis, in conjunction with the beta clamp from PolIII. In Legionella pneumophila (strain Paris), this protein is DNA polymerase IV.